The chain runs to 595 residues: Probable xyloglucan glycosyltransferase 9 (595 aa).

The next 2 membrane-spanning stretches (helical) occupy residues 30–50 (AFVV…INGW) and 77–97 (ATYV…LFLI). Asp-177 is an active-site residue. Substrate contacts are provided by Asp-236 and Asp-238. Asp-330 is an active-site residue. 4 helical membrane-spanning segments follow: residues 408 to 428 (LILP…TMFV), 433 to 453 (LPDW…ILPS), 545 to 564 (IYKK…ARSL), and 570 to 590 (IHFY…LDLI).

Belongs to the glycosyltransferase 2 family. Plant cellulose synthase-like C subfamily.

The protein localises to the golgi apparatus membrane. Its function is as follows. Probable beta-1,4-glucan synthase rather involved in the synthesis of the xyloglucan backbone than cellulose. Seems to work simultaneously with xyloglucan 6-xylosyltransferase. Xyloglucan is a noncellulosic polysaccharides of plant cell wall and consists of a glucan backbone substituted by xylose, galactose and fucose. The sequence is that of Probable xyloglucan glycosyltransferase 9 (CSLC9) from Oryza sativa subsp. japonica (Rice).